The primary structure comprises 202 residues: Urease accessory protein UreG (202 aa).

10–17 (GPVGSGKT) lines the GTP pocket.

It belongs to the SIMIBI class G3E GTPase family. UreG subfamily. As to quaternary structure, homodimer. UreD, UreF and UreG form a complex that acts as a GTP-hydrolysis-dependent molecular chaperone, activating the urease apoprotein by helping to assemble the nickel containing metallocenter of UreC. The UreE protein probably delivers the nickel.

Its subcellular location is the cytoplasm. Its function is as follows. Facilitates the functional incorporation of the urease nickel metallocenter. This process requires GTP hydrolysis, probably effectuated by UreG. The chain is Urease accessory protein UreG from Synechococcus sp. (strain JA-3-3Ab) (Cyanobacteria bacterium Yellowstone A-Prime).